We begin with the raw amino-acid sequence, 288 residues long: Mortality factor 4-like protein 2 (288 aa).

Residues 1–15 are compositionally biased toward polar residues; the sequence is MSSRKQASQTRGQQS. Positions 1–115 are disordered; the sequence is MSSRKQASQT…DPTVESEEAF (115 aa). Ser-71 bears the Phosphoserine mark. The MRG domain maps to 117 to 288; it reads SRMEVKVKIP…ASADYHRKAL (172 aa).

Component of the NuA4 histone acetyltransferase complex which contains the catalytic subunit KAT5/TIP60 and the subunits EP400, TRRAP/PAF400, BRD8/SMAP, EPC1, DMAP1/DNMAP1, RUVBL1/TIP49, RUVBL2, ING3, actin, ACTL6A/BAF53A, MORF4L1/MRG15, MORF4L2/MRGX, MRGBP, YEATS4/GAS41 and VPS72/YL1. The NuA4 complex interacts with MYC and the adenovirus E1A protein. MORF4L1 may also participate in the formation of NuA4 related complexes which lack the KAT5/TIP60 catalytic subunit, but which include the SWI/SNF related protein SRCAP. Component of the MSIN3A histone deacetylase complex, which includes SIN3A, HDAC2, ARID4B, MORF4L1, RBBP4/RbAp48, and RBBP7/RbAp46. Interacts with MRFAP1 and RB1. May also interact with one or more as yet undefined members of the TLE (transducin-like enhancer of split) family of transcriptional repressors.

The protein resides in the nucleus. Functionally, component of the NuA4 histone acetyltransferase complex which is involved in transcriptional activation of select genes principally by acetylation of nucleosomal histone H4 and H2A. This modification may both alter nucleosome - DNA interactions and promote interaction of the modified histones with other proteins which positively regulate transcription. This complex may be required for the activation of transcriptional programs associated with oncogene and proto-oncogene mediated growth induction, tumor suppressor mediated growth arrest and replicative senescence, apoptosis, and DNA repair. The NuA4 complex ATPase and helicase activities seem to be, at least in part, contributed by the association of RUVBL1 and RUVBL2 with EP400. NuA4 may also play a direct role in DNA repair when directly recruited to sites of DNA damage. Also a component of the MSIN3A complex which acts to repress transcription by deacetylation of nucleosomal histones. The chain is Mortality factor 4-like protein 2 (Morf4l2) from Mus musculus (Mouse).